The chain runs to 562 residues: Calcium-dependent protein kinase 5 (562 aa).

Positions 118 to 372 (ELDKYKLGKG…VHKIVNHKWF (255 aa)) constitute a Protein kinase domain. Residues 124-132 (LGKGSYGNV) and K147 each bind ATP. The Proton acceptor role is filled by D238. The J domain autoinhibitory motif signature appears at 394–402 (KFKKFHKLC). The tract at residues 394-429 (KFKKFHKLCKIKKLAITCIAYQLNKKKFGKMKKTFE) is j domain. Residues 403–412 (KIKKLAITCI) carry the J domain EF-hand interaction motif motif. 4 EF-hand domains span residues 419 to 453 (KKFG…VGDN), 454 to 489 (EIDR…HSIL), 490 to 525 (EQDA…SNDQ), and 528 to 562 (FSKE…GRQS). 17 residues coordinate Ca(2+): D432, N434, D436, E443, D467, D469, N471, E478, D503, N505, D507, E514, D541, N543, D545, Y547, and E552.

The protein belongs to the protein kinase superfamily. Ser/Thr protein kinase family. CDPK subfamily. Mg(2+) is required as a cofactor. Post-translationally, may be palmitoylated. Autophosphorylated in vitro.

It localises to the cytoplasm. The protein resides in the cytoplasmic vesicle. Its subcellular location is the secretory vesicle. The protein localises to the microneme membrane. It is found in the cell membrane. The catalysed reaction is L-seryl-[protein] + ATP = O-phospho-L-seryl-[protein] + ADP + H(+). The enzyme catalyses L-threonyl-[protein] + ATP = O-phospho-L-threonyl-[protein] + ADP + H(+). With respect to regulation, activated by calcium. Upon calcium binding to the EF-hand domains, the C-terminus of the junction domain (J domain) undergoes a conformational change which results in the dissociation of the pseudo-substrate inhibitory motif from the catalytic domain. This, in turn, may facilitate the autophosphorylation of the activation loop at Thr-278, which leads to the kinase activation. Calcium-dependent protein kinase which acts as a sensor and effector of intracellular Ca(2+) levels probably in part downstream of cGMP-activated PKG kinase. Plays a central role in host erythrocytes and hepatocytes infection cycles. During the liver stage, involved in sporozoite motility and thus in sporozoite invasion of host hepatocytes, probably together with CDPK1 and CDPK4. Involved in merosome egress from host hepatocytes, probably together with CDPK4. Required for the release of hepatic merozoites from merosomes in the host blood stream. During the asexual blood stage, required for merozoite egress from host erythrocytes by triggering microneme secretion. Phosphorylates transporter NPT1 at late schizont stage. This Plasmodium berghei (strain Anka) protein is Calcium-dependent protein kinase 5.